The primary structure comprises 292 residues: ATP synthase gamma chain (292 aa).

This sequence belongs to the ATPase gamma chain family. As to quaternary structure, F-type ATPases have 2 components, CF(1) - the catalytic core - and CF(0) - the membrane proton channel. CF(1) has five subunits: alpha(3), beta(3), gamma(1), delta(1), epsilon(1). CF(0) has three main subunits: a, b and c.

It localises to the cell inner membrane. Its function is as follows. Produces ATP from ADP in the presence of a proton gradient across the membrane. The gamma chain is believed to be important in regulating ATPase activity and the flow of protons through the CF(0) complex. This chain is ATP synthase gamma chain, found in Brucella canis (strain ATCC 23365 / NCTC 10854 / RM-666).